Here is a 358-residue protein sequence, read N- to C-terminus: Cyanide hydratase (358 aa).

A CN hydrolase domain is found at 8-287 (YKAAAVNAEP…QGLLFVDIDL (280 aa)). Glu-48 functions as the Proton acceptor in the catalytic mechanism. Residue Lys-130 is part of the active site. Cys-165 functions as the Nucleophile in the catalytic mechanism.

This sequence belongs to the carbon-nitrogen hydrolase superfamily. Nitrilase family. In terms of assembly, oligomer of dimers, forming left-handed helical fibers.

It carries out the reaction formamide = hydrogen cyanide + H2O. Functionally, catalyzes the hydration of cyanide to formamide. Degradation of cyanide may be important for plant pathogenic fungi in infection of cyanogenic plants. In Penicillium rubens (strain ATCC 28089 / DSM 1075 / NRRL 1951 / Wisconsin 54-1255) (Penicillium chrysogenum), this protein is Cyanide hydratase.